The following is a 182-amino-acid chain: MAAKNFLLTGRPGIGKTTCVVKTAELLVSRGVKVGGMVTHEVREGGSRVGFKVRDLLTGREGFLAKVGAGAGPRVGKYVVHVEELEAVGVGAILRAVSEAQVVVIDEIGPMELYSPSFLPAVLKALDSDKPVLATIHERESSSGRLRGILERGDVKLYTVTLQNRDLLPPQLAREIASLVAR.

ATP contacts are provided by residues 10-17 (GRPGIGKT) and 102-109 (VVVIDEIG).

Belongs to the THEP1 NTPase family.

It carries out the reaction a ribonucleoside 5'-triphosphate + H2O = a ribonucleoside 5'-diphosphate + phosphate + H(+). In terms of biological role, has nucleotide phosphatase activity towards ATP, GTP, CTP, TTP and UTP. May hydrolyze nucleoside diphosphates with lower efficiency. The protein is Nucleoside-triphosphatase THEP1 of Thermofilum pendens (strain DSM 2475 / Hrk 5).